Consider the following 233-residue polypeptide: tRNA (guanine-N(7)-)-methyltransferase (233 aa).

The disordered stretch occupies residues 1–36; it reads MSEFDPNPPRRNFYGRRHGKTLRQSQKGYLSEDLGS. Residues glutamate 68, glutamate 93, aspartate 120, and aspartate 142 each contribute to the S-adenosyl-L-methionine site. Residue aspartate 142 is part of the active site. Substrate is bound by residues lysine 146, aspartate 178, and 211 to 214; that span reads TRYE.

The protein belongs to the class I-like SAM-binding methyltransferase superfamily. TrmB family.

It catalyses the reaction guanosine(46) in tRNA + S-adenosyl-L-methionine = N(7)-methylguanosine(46) in tRNA + S-adenosyl-L-homocysteine. The protein operates within tRNA modification; N(7)-methylguanine-tRNA biosynthesis. In terms of biological role, catalyzes the formation of N(7)-methylguanine at position 46 (m7G46) in tRNA. The polypeptide is tRNA (guanine-N(7)-)-methyltransferase (Paracoccus denitrificans (strain Pd 1222)).